Consider the following 184-residue polypeptide: Type-1 fimbrial protein, A chain (184 aa).

The signal sequence occupies residues 1 to 22 (MKHKLMTSTIASLMFVAGAAVA). Residues cysteine 46 and cysteine 86 are joined by a disulfide bond.

The protein belongs to the fimbrial protein family.

It localises to the fimbrium. In terms of biological role, fimbriae (also called pili), polar filaments radiating from the surface of the bacterium to a length of 0.5-1.5 micrometers and numbering 100-300 per cell, enable bacteria to colonize the epithelium of specific host organs. In Salmonella typhi, this protein is Type-1 fimbrial protein, A chain (fimA).